A 335-amino-acid chain; its full sequence is MKKIAIDAMGGDHAPKAIVEGVNQAIEAFSDIEIQLYGDQSRIESYLVKSDRVSIVHTDEKINSDDEPAKAIRRKKNASMVLAARAVKDGRADAVLSAGNTGALLAAGLFIIGRIKGVDRPGLLSTLPTVDGSGFDMLDLGANAENTAEHLHQYAILGSFYAKHVRGIAKPRIGLLNNGTEATKGDSLRKEVYKLLASDSSLQFIGNVEARDLMSGVADVVVADGFTGNAVLKSIEGTAMSIMGQLKSAIAVGGVKAKLGALLLKGSLYDLKDTLDYSSAGGAVLFGLKAPLVKSHGSSDAKAIFHTIKQVRTMLETDVVGQLVEEFSKESDAND.

This sequence belongs to the PlsX family. In terms of assembly, homodimer. Probably interacts with PlsY.

It localises to the cytoplasm. It carries out the reaction a fatty acyl-[ACP] + phosphate = an acyl phosphate + holo-[ACP]. It participates in lipid metabolism; phospholipid metabolism. Functionally, catalyzes the reversible formation of acyl-phosphate (acyl-PO(4)) from acyl-[acyl-carrier-protein] (acyl-ACP). This enzyme utilizes acyl-ACP as fatty acyl donor, but not acyl-CoA. The sequence is that of Phosphate acyltransferase from Streptococcus equi subsp. zooepidemicus (strain H70).